We begin with the raw amino-acid sequence, 581 residues long: Putative adenine deaminase BH0637 (581 aa).

The protein belongs to the metallo-dependent hydrolases superfamily. Adenine deaminase family.

The catalysed reaction is adenine + H2O + H(+) = hypoxanthine + NH4(+). The protein is Putative adenine deaminase BH0637 of Halalkalibacterium halodurans (strain ATCC BAA-125 / DSM 18197 / FERM 7344 / JCM 9153 / C-125) (Bacillus halodurans).